The primary structure comprises 377 residues: Phospho-N-acetylmuramoyl-pentapeptide-transferase (377 aa).

10 helical membrane passes run 2–22, 55–75, 82–102, 122–142, 162–182, 195–215, 236–256, 263–283, 288–308, and 343–363; these read IQLL…TPAL, VAIL…SVLA, ITLS…VGFL, MVLQ…FPDA, LAFA…NLIA, LDGL…LITL, PMDL…FLWW, IFMG…FAVL, LLLV…ILQV, and FWVI…GDWL.

It belongs to the glycosyltransferase 4 family. MraY subfamily. Requires Mg(2+) as cofactor.

Its subcellular location is the cell membrane. It catalyses the reaction UDP-N-acetyl-alpha-D-muramoyl-L-alanyl-gamma-D-glutamyl-meso-2,6-diaminopimeloyl-D-alanyl-D-alanine + di-trans,octa-cis-undecaprenyl phosphate = di-trans,octa-cis-undecaprenyl diphospho-N-acetyl-alpha-D-muramoyl-L-alanyl-D-glutamyl-meso-2,6-diaminopimeloyl-D-alanyl-D-alanine + UMP. It functions in the pathway cell wall biogenesis; peptidoglycan biosynthesis. Its function is as follows. Catalyzes the initial step of the lipid cycle reactions in the biosynthesis of the cell wall peptidoglycan: transfers peptidoglycan precursor phospho-MurNAc-pentapeptide from UDP-MurNAc-pentapeptide onto the lipid carrier undecaprenyl phosphate, yielding undecaprenyl-pyrophosphoryl-MurNAc-pentapeptide, known as lipid I. The sequence is that of Phospho-N-acetylmuramoyl-pentapeptide-transferase from Kocuria rhizophila (strain ATCC 9341 / DSM 348 / NBRC 103217 / DC2201).